Here is a 257-residue protein sequence, read N- to C-terminus: Transcription factor MYB4 (257 aa).

HTH myb-type domains lie at 9 to 61 (KMGL…INYL) and 62 to 116 (RPDI…KKRL). DNA-binding regions (H-T-H motif) lie at residues 37–61 (WRAL…INYL) and 89–112 (WSAI…HTHL). Positions 115-179 (RLDAPAQGGH…VAEEHGNAGI (65 aa)) are disordered. Over residues 130 to 140 (GKKHKKPKSAK) the composition is skewed to basic residues. The span at 141 to 170 (KPAAAAAAPPASPERSASSSVTESSMASSV) shows a compositional bias: low complexity.

It localises to the nucleus. Functionally, transcriptional activator involved in cold stress response. Regulates positively the expression of genes involved in reactive oxygen species (ROS) scavenging such as peroxidase and superoxide dismutase during cold stress. Transactivates a complex gene network that have major effects on stress tolerance and panicle development. The protein is Transcription factor MYB4 of Oryza sativa subsp. japonica (Rice).